The following is a 384-amino-acid chain: S-adenosylmethionine synthase (384 aa).

His-15 is a binding site for ATP. Asp-17 provides a ligand contact to Mg(2+). Position 43 (Glu-43) interacts with K(+). Positions 56 and 99 each coordinate L-methionine. Residues 99–109 form a flexible loop region; it reads QSPDINQGVDR. ATP is bound by residues 164 to 166, 230 to 231, Asp-239, 245 to 246, Ala-262, and Lys-266; these read DAK, RF, and RK. Asp-239 is an L-methionine binding site. Lys-270 contributes to the L-methionine binding site.

It belongs to the AdoMet synthase family. As to quaternary structure, homotetramer; dimer of dimers. It depends on Mg(2+) as a cofactor. Requires K(+) as cofactor.

It localises to the cytoplasm. It catalyses the reaction L-methionine + ATP + H2O = S-adenosyl-L-methionine + phosphate + diphosphate. It functions in the pathway amino-acid biosynthesis; S-adenosyl-L-methionine biosynthesis; S-adenosyl-L-methionine from L-methionine: step 1/1. In terms of biological role, catalyzes the formation of S-adenosylmethionine (AdoMet) from methionine and ATP. The overall synthetic reaction is composed of two sequential steps, AdoMet formation and the subsequent tripolyphosphate hydrolysis which occurs prior to release of AdoMet from the enzyme. This is S-adenosylmethionine synthase from Salmonella gallinarum (strain 287/91 / NCTC 13346).